Here is a 1374-residue protein sequence, read N- to C-terminus: Protein Dicer (1374 aa).

In terms of domain architecture, Helicase ATP-binding spans 19–206 (VYNIASKQNT…YHRLYQWEQL (188 aa)). 32–39 (MRTGAGKT) serves as a coordination point for ATP. The short motif at 145 to 148 (DECH) is the DECH box element. Residues 340–517 (DVTDKVFKLL…SLVCEERERV (178 aa)) enclose the Helicase C-terminal domain. One can recognise a Dicer dsRNA-binding fold domain in the interval 537–628 (AVSLLYNFCN…KPLDFRRKIA (92 aa)). RNase III domains are found at residues 916–1038 (QALT…LDSG) and 1083–1233 (SSYI…LDSG). 3 residues coordinate Mg(2+): E1123, D1219, and E1222. The C-terminal dsRNA-binding fold stretch occupies residues 1263–1355 (EHKVYQLLKD…LLYSCNCKFS (93 aa)). Positions 1275, 1312, 1350, and 1352 each coordinate Zn(2+).

This sequence belongs to the helicase family. Dicer subfamily. It depends on Mg(2+) as a cofactor. Requires Mn(2+) as cofactor.

It localises to the cytoplasm. The protein resides in the nucleus. Its function is as follows. Required for G1 arrest and mating in response to nitrogen starvation. Ago1 regulation of cytokinesis and cell cycle checkpoints occurs downstream of dcr1. Required, indirectly, for regulated hyperphosphorylation of cdc2. In terms of biological role, has a role in the RNA interference (RNAi) pathway which is important for heterochromatin formation, accurate chromosome segregation, centromere cohesion and telomere function during mitosis and meiosis. Digests double-stranded RNA (dsRNA) producing 21 to 23 bp dsRNAs, so-called interfering RNAs (siRNA). Required for both post-transcriptional and transcriptional gene silencing. Required for silencing at the centromeres and for initiation of transcriptionally silent heterochromatin at the mating type locus. Promotes histone H3 'Lys-10' methylation necessary for centromere function. Required for recruitment of swi6 and cohesin to an ectopic dg repeat. This chain is Protein Dicer (dcr1), found in Schizosaccharomyces pombe (strain 972 / ATCC 24843) (Fission yeast).